Reading from the N-terminus, the 315-residue chain is tRNA-cytidine(32) 2-sulfurtransferase (315 aa).

A PP-loop motif motif is present at residues 54–59; the sequence is SGGKDS. [4Fe-4S] cluster is bound by residues Cys-129, Cys-132, and Cys-220.

It belongs to the TtcA family. In terms of assembly, homodimer. The cofactor is Mg(2+). [4Fe-4S] cluster is required as a cofactor.

The protein resides in the cytoplasm. The catalysed reaction is cytidine(32) in tRNA + S-sulfanyl-L-cysteinyl-[cysteine desulfurase] + AH2 + ATP = 2-thiocytidine(32) in tRNA + L-cysteinyl-[cysteine desulfurase] + A + AMP + diphosphate + H(+). Its pathway is tRNA modification. In terms of biological role, catalyzes the ATP-dependent 2-thiolation of cytidine in position 32 of tRNA, to form 2-thiocytidine (s(2)C32). The sulfur atoms are provided by the cysteine/cysteine desulfurase (IscS) system. This Bordetella avium (strain 197N) protein is tRNA-cytidine(32) 2-sulfurtransferase.